Consider the following 150-residue polypeptide: MLGAALRRCAVAATTWAGPRGLLHSARTPGPAAAIQSVRCYSHGSYETDEEFDARWVTYFNKPDIDAWELRKGINTLATYDLVPEPKIIDAALRACRRLNDFASTVRILEAVKDKAGPHKEIYPYVIQELRPTLNELGISTPEELGLDKV.

Residues 1–41 (MLGAALRRCAVAATTWAGPRGLLHSARTPGPAAAIQSVRCY) constitute a mitochondrion transit peptide. Positions 2–17 (LGAALRRCAVAATTWA) match the SIFI-degron motif. An N6-acetyllysine mark is found at K87 and K113. The residue at position 141 (T141) is a Phosphothreonine.

The protein belongs to the cytochrome c oxidase subunit 5A family. Component of the cytochrome c oxidase (complex IV, CIV), a multisubunit enzyme composed of 14 subunits. The complex is composed of a catalytic core of 3 subunits MT-CO1, MT-CO2 and MT-CO3, encoded in the mitochondrial DNA, and 11 supernumerary subunits COX4I, COX5A, COX5B, COX6A, COX6B, COX6C, COX7A, COX7B, COX7C, COX8 and NDUFA4, which are encoded in the nuclear genome. The complex exists as a monomer or a dimer and forms supercomplexes (SCs) in the inner mitochondrial membrane with NADH-ubiquinone oxidoreductase (complex I, CI) and ubiquinol-cytochrome c oxidoreductase (cytochrome b-c1 complex, complex III, CIII), resulting in different assemblies (supercomplex SCI(1)III(2)IV(1) and megacomplex MCI(2)III(2)IV(2)). Interacts with AFG1L. Interacts with RAB5IF. Post-translationally, in response to mitochondrial stress, the precursor protein is ubiquitinated by the SIFI complex in the cytoplasm before mitochondrial import, leading to its degradation. Within the SIFI complex, UBR4 initiates ubiquitin chain that are further elongated or branched by KCMF1.

The protein localises to the mitochondrion inner membrane. The protein operates within energy metabolism; oxidative phosphorylation. Its function is as follows. Component of the cytochrome c oxidase, the last enzyme in the mitochondrial electron transport chain which drives oxidative phosphorylation. The respiratory chain contains 3 multisubunit complexes succinate dehydrogenase (complex II, CII), ubiquinol-cytochrome c oxidoreductase (cytochrome b-c1 complex, complex III, CIII) and cytochrome c oxidase (complex IV, CIV), that cooperate to transfer electrons derived from NADH and succinate to molecular oxygen, creating an electrochemical gradient over the inner membrane that drives transmembrane transport and the ATP synthase. Cytochrome c oxidase is the component of the respiratory chain that catalyzes the reduction of oxygen to water. Electrons originating from reduced cytochrome c in the intermembrane space (IMS) are transferred via the dinuclear copper A center (CU(A)) of subunit 2 and heme A of subunit 1 to the active site in subunit 1, a binuclear center (BNC) formed by heme A3 and copper B (CU(B)). The BNC reduces molecular oxygen to 2 water molecules using 4 electrons from cytochrome c in the IMS and 4 protons from the mitochondrial matrix. This Papio anubis (Olive baboon) protein is Cytochrome c oxidase subunit 5A, mitochondrial (COX5A).